Consider the following 492-residue polypeptide: Glycosyltransferase alg8 (492 aa).

Transmembrane regions (helical) follow at residues 13–32 (GWLL…PPQV), 47–69 (IGVW…LYVV), 379–401 (LTVA…LLWV), and 421–443 (PAYP…HVFF).

This sequence belongs to the glycosyltransferase 2 family.

Its subcellular location is the cell membrane. It functions in the pathway glycan biosynthesis; alginate biosynthesis. Its function is as follows. Possibly a processive enzyme that polymerizes GDP-mannuronic acid. The chain is Glycosyltransferase alg8 (alg8) from Azotobacter vinelandii.